Reading from the N-terminus, the 346-residue chain is Protein farnesyltransferase/geranylgeranyltransferase type-1 subunit alpha (346 aa).

5 PFTA repeats span residues 59–93 (RSTR…ALGV), 94–128 (DLRE…KLGA), 130–164 (AVTN…ALGG), 165–198 (WEDE…RSPL), and 205–239 (MREL…NDTQ).

This sequence belongs to the protein prenyltransferase subunit alpha family. Heterodimer of an alpha and a beta subunit. Mg(2+) serves as cofactor.

The enzyme catalyses L-cysteinyl-[protein] + (2E,6E)-farnesyl diphosphate = S-(2E,6E)-farnesyl-L-cysteinyl-[protein] + diphosphate. The catalysed reaction is geranylgeranyl diphosphate + L-cysteinyl-[protein] = S-geranylgeranyl-L-cysteinyl-[protein] + diphosphate. Essential subunit of both the farnesyltransferase and the geranylgeranyltransferase complex. Contributes to the transfer of a farnesyl or geranylgeranyl moiety from farnesyl or geranylgeranyl diphosphate to a cysteine at the fourth position from the C-terminus of several proteins having the C-terminal sequence Cys-aliphatic-aliphatic-X. In Solanum lycopersicum (Tomato), this protein is Protein farnesyltransferase/geranylgeranyltransferase type-1 subunit alpha (FTA).